Here is a 1300-residue protein sequence, read N- to C-terminus: CRISPR-associated endonuclease Cas12a (1300 aa).

Residues 1 to 24 are wedge region 1; sequence MSIYQEFVNKYSLSKTLRFELIPQ. 2 recognition domain regions span residues 25–339 and 340–591; these read GKTL…SFVI and DKLE…QKPY. Binds crRNA alone and in crRNA-target DNA heteroduplex regions lie at residues 47 to 51 and 182 to 186; these read YKKAK and FHENR. The binds DNA in crRNA-target DNA heteroduplex stretch occupies residues 301 to 305; the sequence is NEYIN. Binds crRNA in crRNA-target DNA heteroduplex stretches follow at residues 326–329 and 538–541; these read KQIL and HKLK. The segment at 591-595 is binds crRNA; sequence YSDEK. Residues 592-662 are wedge region 2; that stretch reads SDEKFKLNFE…GYKKIVYKLL (71 aa). Residues 662–679 are LKL, important for PAM recognition and DNA unwinding; it reads LPGANKMLPKVFFSAKSI. The tract at residues 663–762 is PAM-interacting domain (PI); that stretch reads PGANKMLPKV…FYREVENQGY (100 aa). The tract at residues 671–677 is binds DNA protospacer adjacent motif (PAM) on target DNA; sequence KVFFSAK. The interval 692–704 is binds single-strand non-target DNA; the sequence is RNHSTHTKNGSPQ. A wedge region 3 region spans residues 763–892; that stretch reads KLTFENISES…PITINFKSSG (130 aa). 2 binds crRNA regions span residues 791-794 and 803-804; these read KDFS and LH. Active-site for pre-crRNA processing residues include His843, Lys852, and Lys869. 2 binds crRNA regions span residues 851–853 and 865–873; these read NKN and YDLIKDKRF. Residues 893 to 953 form a ruvC-I region; sequence ANKFNDEINL…IGNDRMKTNY (61 aa). The For DNase activity of RuvC domain role is filled by Asp917. The tract at residues 954-971 is bridge helix; it reads HDKLAAIEKDRDSARKDW. A ruvC-II region spans residues 972-1078; it reads KKINNIKEMK…KQTGIIYYVP (107 aa). The active-site For DNase activity of RuvC domain is Glu1006. A nuclease domain region spans residues 1079 to 1254; that stretch reads AGFTSKICPV…QAPKNMPQDA (176 aa). Asp1255 functions as the For DNase activity of RuvC domain in the catalytic mechanism. The segment at 1255-1300 is ruvC-III; the sequence is DANGAYHIGLKGLMLLGRIKNNQEGKKLNLVIKNEEYFEFVQNRNN.

It belongs to the CRISPR-associated endonuclease Cas12a family. In terms of assembly, might be a homodimer. Might be a monomer. Ca(2+) serves as cofactor. Requires Mg(2+) as cofactor.

The enzyme catalyses Endonucleolytic cleavage to 5'-phosphodinucleotide and 5'-phosphooligonucleotide end-products.. It catalyses the reaction RNA = a 5'-hydroxy-ribonucleotide + n nucleoside-2',3'-cyclophosphates.. CRISPR (clustered regularly interspaced short palindromic repeat), is an adaptive immune system that provides protection against mobile genetic elements (viruses, transposable elements and conjugative plasmids). CRISPR clusters contain sequences complementary to antecedent mobile elements and target invading nucleic acids. CRISPR clusters are transcribed and processed into CRISPR RNA (crRNA). Has endonuclease activity on pre-crRNA and dsDNA, using different active sites. A single-RNA guided endonuclease that is also capable of guiding crRNA processing; correct processing of pre-crRNA requires only this protein and the CRISPR locus. pre-crRNA processing proceeds by an intramolecular nucleophilic attack on the scissile phosphate by the 2'-OH of the upstream ribonucleotide, the divalent cation (which is bound by the crRNA) is probably required for ordering the crRNA pseudoknot and/or increasing RNA binding. RNA mutagenesis studies show pre-crRNA cleavage is highly sequence- and structure-specific. Forms a complex with crRNA and complementary dsDNA, where the crRNA displaces the non-target DNA strand and directs endonucleolytic cleavage of both strands of the DNA. Cleavage results in staggered 5-base 5' overhangs 14-18 and 21-23 bases downstream of the PAM (protospacer adjacent motif) on the non-target and target strands respectively. Both target and non-target strand DNA are probably independently cleaved in the same active site. When this protein is expressed in E.coli it prevents plasmids homologous to the first CRISPR spacer from transforming, formally showing it is responsible for plasmid immunity. The sequence is that of CRISPR-associated endonuclease Cas12a from Francisella tularensis subsp. novicida (strain U112).